Reading from the N-terminus, the 239-residue chain is AA9 family lytic polysaccharide monooxygenase C (239 aa).

His1 contributes to the Cu(2+) binding site. A disulfide bridge links Cys39 with Cys190. Asn75 carries an N-linked (GlcNAc...) asparagine glycan. His84 provides a ligand contact to Cu(2+). Asn135 is a glycosylation site (N-linked (GlcNAc...) asparagine). His157 and Gln166 together coordinate O2. Tyr168 provides a ligand contact to Cu(2+). N-linked (GlcNAc...) asparagine glycosylation is found at Asn194 and Asn229.

Belongs to the polysaccharide monooxygenase AA9 family. Cu(2+) serves as cofactor.

Its subcellular location is the secreted. It carries out the reaction [(1-&gt;4)-beta-D-glucosyl]n+m + reduced acceptor + O2 = 4-dehydro-beta-D-glucosyl-[(1-&gt;4)-beta-D-glucosyl]n-1 + [(1-&gt;4)-beta-D-glucosyl]m + acceptor + H2O.. In terms of biological role, lytic polysaccharide monooxygenase (LPMO) that depolymerizes crystalline and amorphous polysaccharides via the oxidation of scissile alpha- or beta-(1-4)-glycosidic bonds, yielding C1 or C4 oxidation products. Catalysis by LPMOs requires the reduction of the active-site copper from Cu(II) to Cu(I) by a reducing agent and H(2)O(2) or O(2) as a cosubstrate. In Gloeophyllum trabeum (Brown rot fungus), this protein is AA9 family lytic polysaccharide monooxygenase C.